The primary structure comprises 145 residues: D-aminoacyl-tRNA deacylase (145 aa).

The Gly-cisPro motif, important for rejection of L-amino acids motif lies at 137–138; sequence GP.

It belongs to the DTD family. As to quaternary structure, homodimer.

It is found in the cytoplasm. The catalysed reaction is glycyl-tRNA(Ala) + H2O = tRNA(Ala) + glycine + H(+). The enzyme catalyses a D-aminoacyl-tRNA + H2O = a tRNA + a D-alpha-amino acid + H(+). Functionally, an aminoacyl-tRNA editing enzyme that deacylates mischarged D-aminoacyl-tRNAs. Also deacylates mischarged glycyl-tRNA(Ala), protecting cells against glycine mischarging by AlaRS. Acts via tRNA-based rather than protein-based catalysis; rejects L-amino acids rather than detecting D-amino acids in the active site. By recycling D-aminoacyl-tRNA to D-amino acids and free tRNA molecules, this enzyme counteracts the toxicity associated with the formation of D-aminoacyl-tRNA entities in vivo and helps enforce protein L-homochirality. The sequence is that of D-aminoacyl-tRNA deacylase from Enterobacter sp. (strain 638).